We begin with the raw amino-acid sequence, 458 residues long: Mitochondrial-processing peptidase subunit beta (458 aa).

A mitochondrion-targeting transit peptide spans 1 to 41 (MYRRLASGLYQTSQRRIAQVQPKSVFVPETIVTTLPNGFRV). A Zn(2+)-binding site is contributed by His-73. Residue Glu-76 is the Proton acceptor of the active site. Residues His-77 and Glu-153 each contribute to the Zn(2+) site.

This sequence belongs to the peptidase M16 family. As to quaternary structure, heterodimer of mppa-1 (alpha) and mppb-1 (beta) subunits, forming the mitochondrial processing protease (MPP) in which mppa-1 is involved in substrate recognition and binding and mppb-1 is the catalytic subunit. The cofactor is Zn(2+).

It is found in the mitochondrion matrix. It catalyses the reaction Release of N-terminal transit peptides from precursor proteins imported into the mitochondrion, typically with Arg in position P2.. Binding to mppa-1 is required for catalytic activity. Inhibited by metal chelator ethylenediaminetetraacetic acid (EDTA). Catalytic subunit of the essential mitochondrial processing protease (MPP), which cleaves the mitochondrial sequence off newly imported precursors proteins. Preferentially, cleaves after an arginine at position P2. This Caenorhabditis elegans protein is Mitochondrial-processing peptidase subunit beta.